A 215-amino-acid polypeptide reads, in one-letter code: Ras-like GTP-binding protein RHO1 (215 aa).

GTP is bound by residues A30, V31, G32, K33, T34, and C35. Mg(2+) is bound at residue T34. 2 consecutive short sequence motifs (switch) follow at residues 43-54 (GEIPTAYVPTVF) and 74-93 (DTAGQEEYDRLRPLSYADSD). T52 serves as a coordination point for Mg(2+). GTP-binding residues include D135 and S166. The segment at 194-215 (VTTQAKSQESTQQKKKSKCLLQ) is disordered. A compositionally biased stretch (low complexity) spans 195-204 (TTQAKSQEST). Residues 206-215 (QKKKSKCLLQ) show a composition bias toward basic residues. The residue at position 212 (C212) is a Cysteine methyl ester. C212 carries the S-geranylgeranyl cysteine lipid modification. Residues 213–215 (LLQ) constitute a propeptide, removed in mature form.

Belongs to the small GTPase superfamily. Rho family. In terms of assembly, interacts (GTP-bound form) with formin1 (via GBD/FH3 domain); the interaction activates formin1. Interacts (GTP-bound form) with profilin1. Interacts (GDP-bound form and when prenylated) with RhoGDI. Mg(2+) is required as a cofactor.

It localises to the cell membrane. It is found in the cytoplasm. The protein resides in the cytoskeleton. Its subcellular location is the cell projection. The protein localises to the phagocytic cup. It localises to the cytoplasmic vesicle. It is found in the phagosome. It carries out the reaction GTP + H2O = GDP + phosphate + H(+). Its activity is regulated as follows. Regulated by guanine nucleotide exchange factors (GEFs) which promote the exchange of bound GDP for free GTP, GTPase activating proteins (GAPs) which increase the GTP hydrolysis activity and GDP dissociation inhibitors which inhibit the dissociation of the nucleotide from the GTPase. Its function is as follows. Small GTPase which cycles between active GTP-bound and inactive GDP-bound states. Involved in actin cytoskeleton remodeling. Regulates phagocytosis by modulating actin cytoskeleton dynamics through the recruitment of formin1 and profilin1 to the phagocytosis nucleation site. This Entamoeba histolytica (strain ATCC 30459 / HM-1:IMSS / ABRM) protein is Ras-like GTP-binding protein RHO1.